The chain runs to 239 residues: Ribulose-phosphate 3-epimerase (239 aa).

Residue serine 9 participates in substrate binding. Residues histidine 34, aspartate 36, and histidine 78 each contribute to the a divalent metal cation site. Aspartate 36 serves as the catalytic Proton acceptor. Substrate-binding positions include histidine 78, 154 to 157, 183 to 185, and 205 to 207; these read GFGG, DGG, and GTS. Aspartate 183 lines the a divalent metal cation pocket. The Proton donor role is filled by aspartate 183.

Belongs to the ribulose-phosphate 3-epimerase family. Requires Co(2+) as cofactor. Fe(2+) serves as cofactor. Mn(2+) is required as a cofactor. The cofactor is Zn(2+).

It carries out the reaction D-ribulose 5-phosphate = D-xylulose 5-phosphate. It functions in the pathway carbohydrate degradation; pentose phosphate pathway; D-xylulose 5-phosphate from D-ribulose 5-phosphate (non-oxidative stage): step 1/1. In terms of biological role, catalyzes the reversible epimerization of D-ribulose 5-phosphate to D-xylulose 5-phosphate. In Eremothecium gossypii (strain ATCC 10895 / CBS 109.51 / FGSC 9923 / NRRL Y-1056) (Yeast), this protein is Ribulose-phosphate 3-epimerase (RPE1).